Reading from the N-terminus, the 1045-residue chain is Extracellular serine protease (1045 aa).

Residues 1–27 (MILNKRLKLAYCVFLGCYGLSIHSSLA) form the signal peptide. The 349-residue stretch at 49–397 (QWGLEAISAE…WGRVNLRDAI (349 aa)) folds into the Peptidase S8 domain. Catalysis depends on charge relay system residues Asp-76, His-112, and Ser-341. Residues 646 to 1045 (SLASTENEKA…SVNAGLTWRF (400 aa)) constitute a propeptide, translocator domain; removed in mature form. The region spanning 769-1045 (IKADDNGAWA…SVNAGLTWRF (277 aa)) is the Autotransporter domain.

The protein belongs to the peptidase S8 family.

It localises to the secreted. This chain is Extracellular serine protease, found in Serratia marcescens.